The chain runs to 677 residues: Membrane-associated tyrosine- and threonine-specific cdc2-inhibitory kinase wee-1.3 (677 aa).

Residues 1 to 22 (MDDTEGNSSMDSIRNGQSSPLP) are compositionally biased toward polar residues. Residues 1 to 30 (MDDTEGNSSMDSIRNGQSSPLPQVTPRLPQ) are disordered. The Protein kinase domain occupies 108–355 (FQIDEIIGRG…SRDLLDHPVI (248 aa)). ATP-binding positions include 114–122 (IGRGSFGEV) and Lys137. The Proton acceptor role is filled by Asp228. Residues Asn233 and Asp246 each contribute to the Mg(2+) site. Disordered stretches follow at residues 478 to 526 (FDND…GTPR) and 632 to 677 (EPSN…GDEV). Over residues 489 to 499 (ATCSSSNSSAI) the composition is skewed to polar residues. The span at 638-652 (TVDHHTILEQSESPR) shows a compositional bias: basic and acidic residues.

It belongs to the protein kinase superfamily. Ser/Thr protein kinase family. WEE1 subfamily.

The protein resides in the golgi apparatus membrane. It is found in the cytoplasm. The enzyme catalyses L-seryl-[protein] + ATP = O-phospho-L-seryl-[protein] + ADP + H(+). It catalyses the reaction L-threonyl-[protein] + ATP = O-phospho-L-threonyl-[protein] + ADP + H(+). Functionally, acts as a negative regulator of entry into mitosis (G2 to M transition) by phosphorylation of the CDK1 kinase during oocyte maturation. Required for oocyte maturation, embryonic development, germline proliferation and initiation of meiosis during spermatogenesis. Required for chromosome structure during mitosis and negative regulation of nuclear envelope breakdown. In Caenorhabditis elegans, this protein is Membrane-associated tyrosine- and threonine-specific cdc2-inhibitory kinase wee-1.3 (wee-1.3).